A 618-amino-acid polypeptide reads, in one-letter code: Medium-chain acyl-CoA ligase ACSF2, mitochondrial (618 aa).

The N-terminal 44 residues, 1 to 44 (MRATAAYVGMLRLGRMCAGSPGVLGARAALSRSWQEARLQAVRF), are a transit peptide targeting the mitochondrion. The residue at position 182 (K182) is an N6-acetyllysine. K185 is subject to N6-acetyllysine; alternate. K185 carries the post-translational modification N6-succinyllysine; alternate. 266 to 274 (TSGTTGSPK) lines the ATP pocket. N6-acetyllysine is present on residues K343 and K401. The residue at position 481 (K481) is an N6-succinyllysine. Positions 496 and 511 each coordinate ATP. The residue at position 513 (K513) is an N6-acetyllysine. N6-acetyllysine; alternate occurs at positions 547 and 573. K547 and K573 each carry N6-succinyllysine; alternate. ATP is bound at residue K602. K602 carries the N6-succinyllysine modification.

It belongs to the ATP-dependent AMP-binding enzyme family.

The protein localises to the mitochondrion. The enzyme catalyses a medium-chain fatty acid + ATP + CoA = a medium-chain fatty acyl-CoA + AMP + diphosphate. It catalyses the reaction octanoate + ATP + CoA = octanoyl-CoA + AMP + diphosphate. In terms of biological role, acyl-CoA synthases catalyze the initial reaction in fatty acid metabolism, by forming a thioester with CoA. Has some preference toward medium-chain substrates. Plays a role in adipocyte differentiation. This chain is Medium-chain acyl-CoA ligase ACSF2, mitochondrial, found in Macaca fascicularis (Crab-eating macaque).